Here is a 463-residue protein sequence, read N- to C-terminus: ATP-dependent protease ATPase subunit HslU (463 aa).

Residues Ile-19, 61 to 66, Asp-277, Glu-341, and Arg-413 each bind ATP; that span reads GVGKTE.

This sequence belongs to the ClpX chaperone family. HslU subfamily. In terms of assembly, a double ring-shaped homohexamer of HslV is capped on each side by a ring-shaped HslU homohexamer. The assembly of the HslU/HslV complex is dependent on binding of ATP.

It is found in the cytoplasm. Functionally, ATPase subunit of a proteasome-like degradation complex; this subunit has chaperone activity. The binding of ATP and its subsequent hydrolysis by HslU are essential for unfolding of protein substrates subsequently hydrolyzed by HslV. HslU recognizes the N-terminal part of its protein substrates and unfolds these before they are guided to HslV for hydrolysis. The polypeptide is ATP-dependent protease ATPase subunit HslU (Bacillus cytotoxicus (strain DSM 22905 / CIP 110041 / 391-98 / NVH 391-98)).